A 2397-amino-acid chain; its full sequence is Cell wall alpha-1,3-glucan synthase mok11 (2397 aa).

Residues 1683–1705 (SNQQSFDFKSSESDSFPQKSPSV) are disordered. The segment covering 1687-1698 (SFDFKSSESDSF) has biased composition (low complexity).

Belongs to the glycosyltransferase group 1 family.

The catalysed reaction is [(1-&gt;3)-alpha-D-glucosyl](n) + UDP-alpha-D-glucose = [(1-&gt;3)-alpha-D-glucosyl](n+1) + UDP + H(+). The polypeptide is Cell wall alpha-1,3-glucan synthase mok11 (mok11) (Schizosaccharomyces pombe (strain 972 / ATCC 24843) (Fission yeast)).